The primary structure comprises 190 residues: Potassium-transporting ATPase KdpC subunit (190 aa).

The chain crosses the membrane as a helical span at residues 13–33; sequence VGFLLLTLMCGVVYPGIVTIF.

This sequence belongs to the KdpC family. The system is composed of three essential subunits: KdpA, KdpB and KdpC.

Its subcellular location is the cell membrane. Part of the high-affinity ATP-driven potassium transport (or Kdp) system, which catalyzes the hydrolysis of ATP coupled with the electrogenic transport of potassium into the cytoplasm. This subunit acts as a catalytic chaperone that increases the ATP-binding affinity of the ATP-hydrolyzing subunit KdpB by the formation of a transient KdpB/KdpC/ATP ternary complex. The chain is Potassium-transporting ATPase KdpC subunit from Listeria monocytogenes serotype 4a (strain HCC23).